The following is a 270-amino-acid chain: Putative phosphoenolpyruvate synthase regulatory protein (270 aa).

ADP is bound at residue 150-157 (GVSRSGKT).

The protein belongs to the pyruvate, phosphate/water dikinase regulatory protein family. PSRP subfamily.

The enzyme catalyses [pyruvate, water dikinase] + ADP = [pyruvate, water dikinase]-phosphate + AMP + H(+). It carries out the reaction [pyruvate, water dikinase]-phosphate + phosphate + H(+) = [pyruvate, water dikinase] + diphosphate. Functionally, bifunctional serine/threonine kinase and phosphorylase involved in the regulation of the phosphoenolpyruvate synthase (PEPS) by catalyzing its phosphorylation/dephosphorylation. The chain is Putative phosphoenolpyruvate synthase regulatory protein from Cupriavidus metallidurans (strain ATCC 43123 / DSM 2839 / NBRC 102507 / CH34) (Ralstonia metallidurans).